The primary structure comprises 317 residues: Beta-ketoacyl-[acyl-carrier-protein] synthase III (317 aa).

Catalysis depends on residues cysteine 112 and histidine 244. The interval 245 to 249 is ACP-binding; that stretch reads QANVR. Asparagine 274 is a catalytic residue.

The protein belongs to the thiolase-like superfamily. FabH family. Homodimer.

It localises to the cytoplasm. It catalyses the reaction malonyl-[ACP] + acetyl-CoA + H(+) = 3-oxobutanoyl-[ACP] + CO2 + CoA. The protein operates within lipid metabolism; fatty acid biosynthesis. In terms of biological role, catalyzes the condensation reaction of fatty acid synthesis by the addition to an acyl acceptor of two carbons from malonyl-ACP. Catalyzes the first condensation reaction which initiates fatty acid synthesis and may therefore play a role in governing the total rate of fatty acid production. Possesses both acetoacetyl-ACP synthase and acetyl transacylase activities. Its substrate specificity determines the biosynthesis of branched-chain and/or straight-chain of fatty acids. This Rickettsia bellii (strain OSU 85-389) protein is Beta-ketoacyl-[acyl-carrier-protein] synthase III.